The following is a 231-amino-acid chain: MSEIKDVIVQGLWKNNSALVQLLGLCPLLAVTSTATNALGLGLATTLVLTLTNLTISTLRHWTPAEIRIPIYVMIIASVVSAVQMLINAYAFGLYQSLGIFIPLIVTNCIVVGRAEAFAAKKGPALSALDGFSIGMGATCAMFVLGSLREIIGNGTLFDGADALLGSWAKVLRVEIFHTDSPFLLAMLPPGAFIGLGLMLAGKYLIDEKMKKRRTEAVAERALPNGETGNV.

Helical transmembrane passes span 18 to 38 (ALVQLLGLCPLLAVTSTATNA), 39 to 59 (LGLGLATTLVLTLTNLTISTL), 63 to 83 (TPAEIRIPIYVMIIASVVSAV), 86 to 106 (LINAYAFGLYQSLGIFIPLIV), 125 to 145 (ALSALDGFSIGMGATCAMFVL), and 182 to 202 (PFLLAMLPPGAFIGLGLMLAG).

Belongs to the NqrDE/RnfAE family. The complex is composed of six subunits: RsxA, RsxB, RsxC, RsxD, RsxE and RsxG.

The protein localises to the cell inner membrane. Functionally, part of a membrane-bound complex that couples electron transfer with translocation of ions across the membrane. Required to maintain the reduced state of SoxR. In Escherichia coli O6:H1 (strain CFT073 / ATCC 700928 / UPEC), this protein is Ion-translocating oxidoreductase complex subunit E.